We begin with the raw amino-acid sequence, 158 residues long: 2-C-methyl-D-erythritol 2,4-cyclodiphosphate synthase (158 aa).

Residues Asp9 and His11 each contribute to the a divalent metal cation site. 4-CDP-2-C-methyl-D-erythritol 2-phosphate is bound by residues 9–11 (DVH) and 35–36 (HS). His43 is an a divalent metal cation binding site. Residues 57-59 (DIG), 62-66 (FPDTD), 101-107 (AQAPKMA), 133-136 (TTTE), Phe140, and Arg143 contribute to the 4-CDP-2-C-methyl-D-erythritol 2-phosphate site.

It belongs to the IspF family. In terms of assembly, homotrimer. The cofactor is a divalent metal cation.

It catalyses the reaction 4-CDP-2-C-methyl-D-erythritol 2-phosphate = 2-C-methyl-D-erythritol 2,4-cyclic diphosphate + CMP. It participates in isoprenoid biosynthesis; isopentenyl diphosphate biosynthesis via DXP pathway; isopentenyl diphosphate from 1-deoxy-D-xylulose 5-phosphate: step 4/6. In terms of biological role, involved in the biosynthesis of isopentenyl diphosphate (IPP) and dimethylallyl diphosphate (DMAPP), two major building blocks of isoprenoid compounds. Catalyzes the conversion of 4-diphosphocytidyl-2-C-methyl-D-erythritol 2-phosphate (CDP-ME2P) to 2-C-methyl-D-erythritol 2,4-cyclodiphosphate (ME-CPP) with a corresponding release of cytidine 5-monophosphate (CMP). The sequence is that of 2-C-methyl-D-erythritol 2,4-cyclodiphosphate synthase from Vibrio campbellii (strain ATCC BAA-1116).